The sequence spans 333 residues: Adenosine deaminase (333 aa).

Zn(2+)-binding residues include histidine 12 and histidine 14. Substrate contacts are provided by histidine 14, aspartate 16, and glycine 170. Histidine 197 lines the Zn(2+) pocket. The active-site Proton donor is glutamate 200. Aspartate 278 serves as a coordination point for Zn(2+). Residue aspartate 279 coordinates substrate.

This sequence belongs to the metallo-dependent hydrolases superfamily. Adenosine and AMP deaminases family. Adenosine deaminase subfamily. Requires Zn(2+) as cofactor.

The catalysed reaction is adenosine + H2O + H(+) = inosine + NH4(+). It catalyses the reaction 2'-deoxyadenosine + H2O + H(+) = 2'-deoxyinosine + NH4(+). Catalyzes the hydrolytic deamination of adenosine and 2-deoxyadenosine. The polypeptide is Adenosine deaminase (Aliivibrio fischeri (strain ATCC 700601 / ES114) (Vibrio fischeri)).